Reading from the N-terminus, the 303-residue chain is UDP-N-acetylenolpyruvoylglucosamine reductase (303 aa).

One can recognise an FAD-binding PCMH-type domain in the interval 30–196 (IGGPADLLII…LEAVFKLKQD (167 aa)). R174 is a catalytic residue. S225 functions as the Proton donor in the catalytic mechanism. The active site involves E295.

Belongs to the MurB family. It depends on FAD as a cofactor.

The protein resides in the cytoplasm. It catalyses the reaction UDP-N-acetyl-alpha-D-muramate + NADP(+) = UDP-N-acetyl-3-O-(1-carboxyvinyl)-alpha-D-glucosamine + NADPH + H(+). It participates in cell wall biogenesis; peptidoglycan biosynthesis. Functionally, cell wall formation. The chain is UDP-N-acetylenolpyruvoylglucosamine reductase from Bacillus pumilus (strain SAFR-032).